Reading from the N-terminus, the 236-residue chain is Lipoprotein NlpE (236 aa).

A signal peptide spans 1–20 (MVKKAIVTAMAVISLFTLMG). The N-palmitoyl cysteine moiety is linked to residue cysteine 21. The S-diacylglycerol cysteine moiety is linked to residue cysteine 21. The segment at 21-100 (CNNRAEVDTL…WARTADKLVL (80 aa)) is N-terminal domain. Over 21-236 (CNNRAEVDTL…PNQDCSSLGQ (216 aa)) the chain is Periplasmic. The CXXC motif lies at 51 to 54 (CADC). Residues 126 to 236 (PIESQFNYTL…PNQDCSSLGQ (111 aa)) are C-terminal domain. The segment at 144–156 (MTPMTLRGMYFYM) is could contain a copper-binding motif. Cysteines 165 and 231 form a disulfide.

In terms of assembly, probably exists as a monomer in vivo, can however form homodimers which swap domains. Post-translationally, palmitoylated. Seems to only form a disulfide bond between Cys-165 and Cys-231. The 2 other cysteine residues may however be chemically active.

It localises to the cell outer membrane. In terms of biological role, involved in copper homeostasis, could be involved in both copper efflux and the delivery of copper to copper-dependent enzymes. Required for efficient binding of stationary phase cells to hydrophobic surfaces, part of the process of biofilm formation. Functions during envelope stress responses; when overproduced induces degP through the activation of the two-component envelope stress response system CpxA/CpxR. DegP induction seems to require membrane anchoring of this protein. Structural changes and/or interaction of the CXXC motif with its environment may lead to activation of the Cpx stress response. The protein is Lipoprotein NlpE of Escherichia coli (strain K12).